The chain runs to 350 residues: Phenylalanine--tRNA ligase alpha subunit (350 aa).

Glu257 contacts Mg(2+).

This sequence belongs to the class-II aminoacyl-tRNA synthetase family. Phe-tRNA synthetase alpha subunit type 1 subfamily. As to quaternary structure, tetramer of two alpha and two beta subunits. Requires Mg(2+) as cofactor.

It localises to the cytoplasm. It carries out the reaction tRNA(Phe) + L-phenylalanine + ATP = L-phenylalanyl-tRNA(Phe) + AMP + diphosphate + H(+). The protein is Phenylalanine--tRNA ligase alpha subunit of Listeria monocytogenes serotype 4a (strain HCC23).